The primary structure comprises 490 residues: ATP synthase subunit beta, chloroplastic (490 aa).

169–176 (GGAGVGKT) lines the ATP pocket.

It belongs to the ATPase alpha/beta chains family. In terms of assembly, F-type ATPases have 2 components, CF(1) - the catalytic core - and CF(0) - the membrane proton channel. CF(1) has five subunits: alpha(3), beta(3), gamma(1), delta(1), epsilon(1). CF(0) has four main subunits: a(1), b(1), b'(1) and c(9-12).

Its subcellular location is the plastid. It is found in the chloroplast thylakoid membrane. It catalyses the reaction ATP + H2O + 4 H(+)(in) = ADP + phosphate + 5 H(+)(out). In terms of biological role, produces ATP from ADP in the presence of a proton gradient across the membrane. The catalytic sites are hosted primarily by the beta subunits. The protein is ATP synthase subunit beta, chloroplastic of Cyanidium caldarium (Red alga).